Here is a 429-residue protein sequence, read N- to C-terminus: Glutamyl-tRNA reductase (429 aa).

Residues 52–55 (TCNR), Ser-110, 115–117 (EAQ), and Gln-121 contribute to the substrate site. The active-site Nucleophile is Cys-53. 190–195 (GAGAMI) contacts NADP(+).

It belongs to the glutamyl-tRNA reductase family. Homodimer.

It carries out the reaction (S)-4-amino-5-oxopentanoate + tRNA(Glu) + NADP(+) = L-glutamyl-tRNA(Glu) + NADPH + H(+). Its pathway is porphyrin-containing compound metabolism; protoporphyrin-IX biosynthesis; 5-aminolevulinate from L-glutamyl-tRNA(Glu): step 1/2. Its function is as follows. Catalyzes the NADPH-dependent reduction of glutamyl-tRNA(Glu) to glutamate 1-semialdehyde (GSA). In Verminephrobacter eiseniae (strain EF01-2), this protein is Glutamyl-tRNA reductase.